Here is a 272-residue protein sequence, read N- to C-terminus: Indole-3-glycerol phosphate synthase (272 aa).

This sequence belongs to the TrpC family.

The enzyme catalyses 1-(2-carboxyphenylamino)-1-deoxy-D-ribulose 5-phosphate + H(+) = (1S,2R)-1-C-(indol-3-yl)glycerol 3-phosphate + CO2 + H2O. Its pathway is amino-acid biosynthesis; L-tryptophan biosynthesis; L-tryptophan from chorismate: step 4/5. This Paenarthrobacter aurescens (strain TC1) protein is Indole-3-glycerol phosphate synthase.